Consider the following 286-residue polypeptide: NH(3)-dependent NAD(+) synthetase (286 aa).

43 to 50 (GVSGGVDS) provides a ligand contact to ATP. Residue aspartate 49 participates in Mg(2+) binding. Arginine 131 is a binding site for deamido-NAD(+). ATP is bound at residue threonine 151. Position 156 (glutamate 156) interacts with Mg(2+). Lysine 164 and aspartate 171 together coordinate deamido-NAD(+). Residues lysine 180 and serine 202 each contribute to the ATP site. The tract at residues 257–286 (HEASSHKRSPPASPDLGEIKKHYKQHAGKK) is disordered. 262–263 (HK) contributes to the deamido-NAD(+) binding site. Over residues 277-286 (KHYKQHAGKK) the composition is skewed to basic residues.

The protein belongs to the NAD synthetase family. Homodimer.

It carries out the reaction deamido-NAD(+) + NH4(+) + ATP = AMP + diphosphate + NAD(+) + H(+). Its pathway is cofactor biosynthesis; NAD(+) biosynthesis; NAD(+) from deamido-NAD(+) (ammonia route): step 1/1. Its function is as follows. Catalyzes the ATP-dependent amidation of deamido-NAD to form NAD. Uses ammonia as a nitrogen source. In Aeropyrum pernix (strain ATCC 700893 / DSM 11879 / JCM 9820 / NBRC 100138 / K1), this protein is NH(3)-dependent NAD(+) synthetase.